Here is a 291-residue protein sequence, read N- to C-terminus: tRNA U34 carboxymethyltransferase (291 aa).

Residues K61, W75, K80, G100, 122-124 (DPS), Y169, and R284 each bind carboxy-S-adenosyl-L-methionine.

The protein belongs to the class I-like SAM-binding methyltransferase superfamily. CmoB family. As to quaternary structure, homotetramer.

It carries out the reaction carboxy-S-adenosyl-L-methionine + 5-hydroxyuridine(34) in tRNA = 5-carboxymethoxyuridine(34) in tRNA + S-adenosyl-L-homocysteine + H(+). Its function is as follows. Catalyzes carboxymethyl transfer from carboxy-S-adenosyl-L-methionine (Cx-SAM) to 5-hydroxyuridine (ho5U) to form 5-carboxymethoxyuridine (cmo5U) at position 34 in tRNAs. This chain is tRNA U34 carboxymethyltransferase, found in Campylobacter lari (strain RM2100 / D67 / ATCC BAA-1060).